A 124-amino-acid chain; its full sequence is Small ribosomal subunit protein uS12 (124 aa).

The residue at position 89 (Asp89) is a 3-methylthioaspartic acid.

This sequence belongs to the universal ribosomal protein uS12 family. In terms of assembly, part of the 30S ribosomal subunit. Contacts proteins S8 and S17. May interact with IF1 in the 30S initiation complex.

Functionally, with S4 and S5 plays an important role in translational accuracy. Its function is as follows. Interacts with and stabilizes bases of the 16S rRNA that are involved in tRNA selection in the A site and with the mRNA backbone. Located at the interface of the 30S and 50S subunits, it traverses the body of the 30S subunit contacting proteins on the other side and probably holding the rRNA structure together. The combined cluster of proteins S8, S12 and S17 appears to hold together the shoulder and platform of the 30S subunit. The sequence is that of Small ribosomal subunit protein uS12 (rpsL) from Mannheimia haemolytica (Pasteurella haemolytica).